A 180-amino-acid chain; its full sequence is Required for excision 1-B domain-containing protein (180 aa).

The interval 1–23 (MITAEAASESTVPAVPGDTAATG) is disordered.

The protein is Required for excision 1-B domain-containing protein of Bos taurus (Bovine).